The following is a 169-amino-acid chain: Cell division inhibitor SulA (169 aa).

The span at 1 to 13 shows a compositional bias: polar residues; the sequence is MFTSAHANRSAQA. The tract at residues 1–26 is disordered; sequence MFTSAHANRSAQASAPAGHYAHRSGE. The ftsZ binding stretch occupies residues 106–112; the sequence is ALRTGNY. Positions 162-169 are lon protease binding; that stretch reads KIHSNLYH.

Belongs to the SulA family. Interacts with FtsZ. Post-translationally, is rapidly cleaved and degraded by the Lon protease once DNA damage is repaired.

Component of the SOS system and an inhibitor of cell division. Accumulation of SulA causes rapid cessation of cell division and the appearance of long, non-septate filaments. In the presence of GTP, binds a polymerization-competent form of FtsZ in a 1:1 ratio, thus inhibiting FtsZ polymerization and therefore preventing it from participating in the assembly of the Z ring. This mechanism prevents the premature segregation of damaged DNA to daughter cells during cell division. The protein is Cell division inhibitor SulA of Klebsiella pneumoniae subsp. pneumoniae (strain ATCC 700721 / MGH 78578).